Consider the following 120-residue polypeptide: Holo-[acyl-carrier-protein] synthase (120 aa).

The Mg(2+) site is built by Asp8 and Glu58.

Belongs to the P-Pant transferase superfamily. AcpS family. Mg(2+) serves as cofactor.

It is found in the cytoplasm. It catalyses the reaction apo-[ACP] + CoA = holo-[ACP] + adenosine 3',5'-bisphosphate + H(+). Functionally, transfers the 4'-phosphopantetheine moiety from coenzyme A to a Ser of acyl-carrier-protein. This is Holo-[acyl-carrier-protein] synthase from Streptococcus sanguinis (strain SK36).